A 209-amino-acid chain; its full sequence is UPF0502 protein mll4256 (209 aa).

Belongs to the UPF0502 family.

The sequence is that of UPF0502 protein mll4256 from Mesorhizobium japonicum (strain LMG 29417 / CECT 9101 / MAFF 303099) (Mesorhizobium loti (strain MAFF 303099)).